Consider the following 1226-residue polypeptide: Cytosolic carboxypeptidase 1 (1226 aa).

Residues 599-619 (TEDDEDTESNSSVEQASVEVP) form a disordered region. One can recognise a Peptidase M14 domain in the interval 848-1138 (YPYTYSTLQM…KFCVGLLRLK (291 aa)). Zn(2+) is bound by residues H920, E923, and H1017. The active-site Proton donor/acceptor is the E1102. Position 1168 is a phosphoserine (S1168). The interval 1206 to 1226 (YEPSAQEEVLSDSELSRTYLP) is disordered.

This sequence belongs to the peptidase M14 family. In terms of assembly, interacts with MYLK. It depends on Zn(2+) as a cofactor.

It is found in the cytoplasm. Its subcellular location is the cytosol. It localises to the nucleus. The protein localises to the mitochondrion. It catalyses the reaction (L-glutamyl)(n+1)-gamma-L-glutamyl-L-glutamyl-[protein] + H2O = (L-glutamyl)(n)-gamma-L-glutamyl-L-glutamyl-[protein] + L-glutamate. It carries out the reaction C-terminal L-alpha-aminoacyl-L-glutamyl-L-glutamyl-[tubulin] + H2O = C-terminal L-alpha-aminoacyl-L-glutamyl-[tubulin] + L-glutamate. Metallocarboxypeptidase that mediates protein deglutamylation of tubulin and non-tubulin target proteins. Catalyzes the removal of polyglutamate side chains present on the gamma-carboxyl group of glutamate residues within the C-terminal tail of alpha- and beta-tubulin. Specifically cleaves tubulin long-side-chains, while it is not able to remove the branching point glutamate. Also catalyzes the removal of polyglutamate residues from the carboxy-terminus of alpha-tubulin as well as non-tubulin proteins such as MYLK. Involved in KLF4 deglutamylation which promotes KLF4 proteasome-mediated degradation, thereby negatively regulating cell pluripotency maintenance and embryogenesis. The chain is Cytosolic carboxypeptidase 1 from Homo sapiens (Human).